A 162-amino-acid chain; its full sequence is Cyclic pyranopterin monophosphate synthase (162 aa).

Residues 75–77 and 113–114 contribute to the substrate site; these read LCH and ME. The active site involves Asp128.

Belongs to the MoaC family. As to quaternary structure, homohexamer; trimer of dimers.

The catalysed reaction is (8S)-3',8-cyclo-7,8-dihydroguanosine 5'-triphosphate = cyclic pyranopterin phosphate + diphosphate. Its pathway is cofactor biosynthesis; molybdopterin biosynthesis. In terms of biological role, catalyzes the conversion of (8S)-3',8-cyclo-7,8-dihydroguanosine 5'-triphosphate to cyclic pyranopterin monophosphate (cPMP). The polypeptide is Cyclic pyranopterin monophosphate synthase (Burkholderia cenocepacia (strain ATCC BAA-245 / DSM 16553 / LMG 16656 / NCTC 13227 / J2315 / CF5610) (Burkholderia cepacia (strain J2315))).